Consider the following 488-residue polypeptide: ATP synthase subunit beta (488 aa).

An ATP-binding site is contributed by 155 to 162 (GGAGVGKT). The disordered stretch occupies residues 467–488 (GFAPDDQNTDADEKPAAQAAAN).

It belongs to the ATPase alpha/beta chains family. As to quaternary structure, F-type ATPases have 2 components, CF(1) - the catalytic core - and CF(0) - the membrane proton channel. CF(1) has five subunits: alpha(3), beta(3), gamma(1), delta(1), epsilon(1). CF(0) has three main subunits: a(1), b(2) and c(9-12). The alpha and beta chains form an alternating ring which encloses part of the gamma chain. CF(1) is attached to CF(0) by a central stalk formed by the gamma and epsilon chains, while a peripheral stalk is formed by the delta and b chains.

It is found in the cell membrane. It carries out the reaction ATP + H2O + 4 H(+)(in) = ADP + phosphate + 5 H(+)(out). Produces ATP from ADP in the presence of a proton gradient across the membrane. The catalytic sites are hosted primarily by the beta subunits. This Lacticaseibacillus casei (strain BL23) (Lactobacillus casei) protein is ATP synthase subunit beta.